Reading from the N-terminus, the 127-residue chain is uncharacterized protein (127 aa).

A helical transmembrane segment spans residues 85–107 (VYLGKIGFVLLHVFYLSCIAYYD).

The protein localises to the mitochondrion membrane. This is an uncharacterized protein from Dictyostelium discoideum (Social amoeba).